Reading from the N-terminus, the 340-residue chain is Large ribosomal subunit protein uL29m (340 aa).

Over residues 1 to 10 the composition is skewed to polar residues; that stretch reads MIRSLHTSAV. The tract at residues 1–22 is disordered; the sequence is MIRSLHTSAVRQGRKKWPKPLP.

The protein belongs to the universal ribosomal protein uL29 family. In terms of assembly, component of the mitochondrial large ribosomal subunit. Mature mitochondrial ribosomes consist of a small (37S) and a large (54S) subunit. The 37S subunit contains at least 33 different proteins and 1 molecule of RNA (15S). The 54S subunit contains at least 45 different proteins and 1 molecule of RNA (21S).

The protein localises to the mitochondrion. The sequence is that of Large ribosomal subunit protein uL29m (MRPL4) from Yarrowia lipolytica (strain CLIB 122 / E 150) (Yeast).